We begin with the raw amino-acid sequence, 391 residues long: Phosphoglycerate kinase (391 aa).

Substrate contacts are provided by residues 21 to 23 (DFN), R41, 64 to 67 (HLGR), R121, and R154. ATP is bound by residues K205, E322, and 348–351 (GGDS).

The protein belongs to the phosphoglycerate kinase family. Monomer.

The protein localises to the cytoplasm. It carries out the reaction (2R)-3-phosphoglycerate + ATP = (2R)-3-phospho-glyceroyl phosphate + ADP. The protein operates within carbohydrate degradation; glycolysis; pyruvate from D-glyceraldehyde 3-phosphate: step 2/5. This chain is Phosphoglycerate kinase, found in Solibacter usitatus (strain Ellin6076).